An 85-amino-acid polypeptide reads, in one-letter code: Serine protease inhibitor Cvsi-2 (85 aa).

An N-terminal signal peptide occupies residues 1-18; that stretch reads MKVAVVVALLCFVCYTAA.

Post-translationally, contains 6 disulfide bonds. Detected in hemolymph (at protein level). Within the digestive gland expression is limited to the basophil cells of the digestive diverticula.

The protein resides in the secreted. Functionally, slow-binding inhibitor of serine proteases. The inhibitor rapidly binds to the protease forming a weak enzyme-inhibitor complex, and this is followed by a slow isomerization forming a tight-binding enzyme-inhibitor complex. Active against subtilisin A with a dissociation constant of 0.18 nM. Active against perkinsin. Not active against thermolysin, papain or pepsin. This is Serine protease inhibitor Cvsi-2 from Crassostrea virginica (Eastern oyster).